The primary structure comprises 152 residues: Deoxyuridine 5'-triphosphate nucleotidohydrolase (152 aa).

Substrate contacts are provided by residues 71 to 73 (RSG), Asn-84, 88 to 90 (LID), and Met-98.

Belongs to the dUTPase family. Requires Mg(2+) as cofactor.

The enzyme catalyses dUTP + H2O = dUMP + diphosphate + H(+). It functions in the pathway pyrimidine metabolism; dUMP biosynthesis; dUMP from dCTP (dUTP route): step 2/2. Functionally, this enzyme is involved in nucleotide metabolism: it produces dUMP, the immediate precursor of thymidine nucleotides and it decreases the intracellular concentration of dUTP so that uracil cannot be incorporated into DNA. The chain is Deoxyuridine 5'-triphosphate nucleotidohydrolase from Cronobacter sakazakii (strain ATCC BAA-894) (Enterobacter sakazakii).